We begin with the raw amino-acid sequence, 359 residues long: MTQPVTVEVRTDPPYPVIIGTGLLDDLARVLDGRHKVAILHQPTLTQTAEVIRNHLADKGIDAHRIEIPDAEGGKELPVVGFIWEVLGRIGLGRKDAIVSLGGGAATDVAGFAAATWLRGVDIVHVPTTLLGMVDAAVGGKTGINTDAGKNLVGAFHQPAAVLIDLATLESLPRNEIVAGMAEIVKAGFIADPVILDMIEADPQAALDPTGQVLPELIRRAVVVKAEVVAADEKESQLREILNYGHTLAHAIERRERYQWRHGAAVSVGLVFAAELGRLAGRLDDATAERHRAILISLGLPVTYDADALPQLMEAMLGDKKTRAGVLRFVVLDGLGKPGRLEGPDPSLLAAAYAEVARS.

NAD(+)-binding positions include 70–75, 104–108, 128–129, lysine 141, and lysine 150; these read DAEGGK, GAATD, and TT. Residues glutamate 183, histidine 246, and histidine 262 each contribute to the Zn(2+) site.

This sequence belongs to the sugar phosphate cyclases superfamily. Dehydroquinate synthase family. Co(2+) is required as a cofactor. Requires Zn(2+) as cofactor. It depends on NAD(+) as a cofactor.

The protein localises to the cytoplasm. The enzyme catalyses 7-phospho-2-dehydro-3-deoxy-D-arabino-heptonate = 3-dehydroquinate + phosphate. The protein operates within metabolic intermediate biosynthesis; chorismate biosynthesis; chorismate from D-erythrose 4-phosphate and phosphoenolpyruvate: step 2/7. Its function is as follows. Catalyzes the conversion of 3-deoxy-D-arabino-heptulosonate 7-phosphate (DAHP) to dehydroquinate (DHQ). This is 3-dehydroquinate synthase from Mycolicibacterium vanbaalenii (strain DSM 7251 / JCM 13017 / BCRC 16820 / KCTC 9966 / NRRL B-24157 / PYR-1) (Mycobacterium vanbaalenii).